The following is a 270-amino-acid chain: Short chain dehydrogenase/reductase dpfgG (270 aa).

Positions 18, 69, 96, 130, 171, 200, and 204 each coordinate NADP(+). The active-site Lowers pKa of active site Tyr is K171.

Belongs to the short-chain dehydrogenases/reductases (SDR) family.

It functions in the pathway secondary metabolite biosynthesis; terpenoid biosynthesis. Short chain dehydrogenase/reductase; part of the gene cluster that mediates the biosynthesis of diterpenoid pyrones. The first step of the pathway is the synthesis of the alpha-pyrone moiety by the polyketide synthase dpfgA via condensation of one acetyl-CoA starter unit with 3 malonyl-CoA units and 2 methylations. The alpha-pyrone is then combined with geranylgeranyl pyrophosphate (GGPP) formed by the GGPP synthase dpfgD through the action of the prenyltransferase dpfgC to yield a linear alpha-pyrone diterpenoid. Subsequent steps in the diterpenoid pyrone biosynthetic pathway involve the decalin core formation, which is initiated by the epoxidation of the C10-C11 olefin by the FAD-dependent oxidoreductase dpfgE, and is followed by a cyclization cascade catalyzed by the terpene cyclase dpfgB. The short chain dehydrogenase/reductase dpfgG then oxidizes the 8S hydroxy group to a ketone and the short chain dehydrogenase/reductase dpfgH reduces the ketone to the 8R hydroxy group to yield higginsianin B. Higginsianin B is further methylated by the methyltransferase dpfgI to produce the intermediate named FDDP B. The cytochrome P450 monooxygenase dfgpJ then catalyzes a three-step oxidation at C-27 to generate a carboxylic acid as well as C-26 hydroxylation. Finally, methyltransferase dpfgK methylates the carboxylic acid generated by dpfgJ, yielding the final diterpenoid pyrones from the pathway which were named FDDP D and FDDP E. The chain is Short chain dehydrogenase/reductase dpfgG from Gibberella zeae (strain ATCC MYA-4620 / CBS 123657 / FGSC 9075 / NRRL 31084 / PH-1) (Wheat head blight fungus).